The primary structure comprises 453 residues: Pup--protein ligase (453 aa).

E9 is a Mg(2+) binding site. Position 53 (R53) interacts with ATP. Y55 lines the Mg(2+) pocket. Catalysis depends on D57, which acts as the Proton acceptor. E63 serves as a coordination point for Mg(2+). Positions 66 and 420 each coordinate ATP.

The protein belongs to the Pup ligase/Pup deamidase family. Pup-conjugating enzyme subfamily.

The enzyme catalyses ATP + [prokaryotic ubiquitin-like protein]-L-glutamate + [protein]-L-lysine = ADP + phosphate + N(6)-([prokaryotic ubiquitin-like protein]-gamma-L-glutamyl)-[protein]-L-lysine.. Its pathway is protein degradation; proteasomal Pup-dependent pathway. It participates in protein modification; protein pupylation. Its function is as follows. Catalyzes the covalent attachment of the prokaryotic ubiquitin-like protein modifier Pup to the proteasomal substrate proteins, thereby targeting them for proteasomal degradation. This tagging system is termed pupylation. The ligation reaction involves the side-chain carboxylate of the C-terminal glutamate of Pup and the side-chain amino group of a substrate lysine. This Streptomyces griseus subsp. griseus (strain JCM 4626 / CBS 651.72 / NBRC 13350 / KCC S-0626 / ISP 5235) protein is Pup--protein ligase.